The sequence spans 784 residues: ATP-dependent zinc metalloprotease FTSH 9, chloroplastic/mitochondrial (784 aa).

3 stretches are compositionally biased toward low complexity: residues 1–12, 24–34, and 42–53; these read MSALQASLLLRP, PLPSSSASFPR, and PLPLRALASEGP. A chloroplast and mitochondrion-targeting transit peptide spans 1-47; sequence MSALQASLLLRPLPSPLPPRRRLPLPSSSASFPRAGHHRRLPLPLRA. The disordered stretch occupies residues 1–71; it reads MSALQASLLL…DPPPPELPAA (71 aa). Positions 54–69 are enriched in pro residues; sequence QPAPSPAPDPPPPELP. 2 helical membrane-spanning segments follow: residues 104 to 124 and 267 to 287; these read WVLA…DWVV and IFST…GAAA. Residue 368 to 375 coordinates ATP; the sequence is GSPGTGKT. Position 601 (His-601) interacts with Zn(2+). Residue Glu-602 is part of the active site. Residues His-605 and Asp-679 each coordinate Zn(2+).

The protein in the N-terminal section; belongs to the AAA ATPase family. In the C-terminal section; belongs to the peptidase M41 family. Requires Zn(2+) as cofactor.

Its subcellular location is the mitochondrion membrane. The protein resides in the plastid. It is found in the chloroplast thylakoid membrane. Probable ATP-dependent zinc metallopeptidase. The chain is ATP-dependent zinc metalloprotease FTSH 9, chloroplastic/mitochondrial (FTSH9) from Oryza sativa subsp. japonica (Rice).